The following is a 288-amino-acid chain: Disulfide-bond oxidoreductase YghU (288 aa).

Glutathione contacts are provided by residues Asn26, 52 to 54 (TPN), Gln87, Ile101, 117 to 118 (ES), Gln151, and Arg178. In terms of domain architecture, GST N-terminal spans 46–133 (QLYSLGTPNG…YLAEKFGYFL (88 aa)). A GST C-terminal domain is found at 139 to 265 (KRTETMNWLF…RIVNRTNGPL (127 aa)). The tract at residues 260–288 (RTNGPLNEQLHERHDASDFETNTEDKRQG) is disordered. Positions 268–288 (QLHERHDASDFETNTEDKRQG) are enriched in basic and acidic residues.

The protein belongs to the GST superfamily. Nu-class GSH transferase family. Homodimer.

Its function is as follows. Exhibits a robust glutathione (GSH)-dependent disulfide-bond reductase activity toward the model substrate, 2-hydroxyethyl disulfide; the actual physiological substrates are not known. Also displays a modest GSH-dependent peroxidase activity toward several organic hydroperoxides, such as cumene hydroperoxide and linoleic acid 13(S)-hydroperoxide, but does not reduce H(2)O(2) or tert-butyl hydroperoxide at appreciable rates. Exhibits little or no GSH transferase activity with most typical electrophilic substrates, and has no detectable transferase activity toward 1-chloro-2,4-dinitrobenzene (CDNB) with glutathionylspermidine (GspSH) as the nucleophilic substrate. The polypeptide is Disulfide-bond oxidoreductase YghU (yghU) (Escherichia coli (strain K12)).